Reading from the N-terminus, the 207-residue chain is Large ribosomal subunit protein bL25 (207 aa).

The segment at 185–207 is disordered; the sequence is DLEEETGEAAAEAEAPAEEGAES.

It belongs to the bacterial ribosomal protein bL25 family. CTC subfamily. As to quaternary structure, part of the 50S ribosomal subunit; part of the 5S rRNA/L5/L18/L25 subcomplex. Contacts the 5S rRNA. Binds to the 5S rRNA independently of L5 and L18.

In terms of biological role, this is one of the proteins that binds to the 5S RNA in the ribosome where it forms part of the central protuberance. The chain is Large ribosomal subunit protein bL25 from Rhodococcus jostii (strain RHA1).